A 452-amino-acid chain; its full sequence is Maltoporin (452 aa).

Residues 1–25 (MMITLRKLPLAVAVAAGVMSAQAMA) form the signal peptide.

The protein belongs to the porin LamB (TC 1.B.3) family. As to quaternary structure, homotrimer formed of three 18-stranded antiparallel beta-barrels, containing three independent channels.

The protein localises to the cell outer membrane. It carries out the reaction beta-maltose(in) = beta-maltose(out). Involved in the transport of maltose and maltodextrins. This chain is Maltoporin, found in Salmonella agona (strain SL483).